The sequence spans 480 residues: Glycogen synthase (480 aa).

Lysine 15 provides a ligand contact to ADP-alpha-D-glucose.

The protein belongs to the glycosyltransferase 1 family. Bacterial/plant glycogen synthase subfamily.

The catalysed reaction is [(1-&gt;4)-alpha-D-glucosyl](n) + ADP-alpha-D-glucose = [(1-&gt;4)-alpha-D-glucosyl](n+1) + ADP + H(+). It functions in the pathway glycan biosynthesis; glycogen biosynthesis. Synthesizes alpha-1,4-glucan chains using ADP-glucose. This Rhizobium tropici protein is Glycogen synthase.